Here is a 1241-residue protein sequence, read N- to C-terminus: Sterol 3-beta-glucosyltransferase (1241 aa).

Residues 1–11 are compositionally biased toward acidic residues; that stretch reads MSGIESTEEPC. 2 disordered regions span residues 1–97 and 124–189; these read MSGI…KPSI and DQQV…TLRK. Over residues 25–34 the composition is skewed to basic and acidic residues; the sequence is PEERQTRKDS. The span at 136 to 155 shows a compositional bias: acidic residues; sequence ESEDQQADESSDEQEDDDQD. In terms of domain architecture, GRAM 1 spans 220-267; sequence NKLKRTFDISDTDVFISDYPCWLMGDVLLQGHLYITKHHILFFAFLPK. One can recognise a PH domain in the interval 271–373; the sequence is SISKSGALTT…WVSSLKKHIF (103 aa). A disordered region spans residues 499–556; it reads DDFSQEQESAESSKPVSDDEIVSADDNQELEEKQPQDNLANAEKENHDKVSRANSRRT. The segment covering 516–527 has biased composition (acidic residues); sequence DDEIVSADDNQE. A compositionally biased stretch (basic and acidic residues) spans 540–549; sequence AEKENHDKVS. The region spanning 609–675 is the GRAM 2 domain; the sequence is ERFRKHFSLT…SDIENVNKEK (67 aa). Residues 720–741 form a disordered region; that stretch reads KGSTDSSPPNASEGSSDESCNL. Over residues 723-741 the composition is skewed to polar residues; that stretch reads TDSSPPNASEGSSDESCNL. 12 residues coordinate UDP-alpha-D-glucose: S797, R798, D800, N1071, V1098, H1100, H1113, S1116, G1117, T1118, D1137, and Q1138.

It belongs to the glycosyltransferase 28 family.

The protein localises to the cytoplasm. Its subcellular location is the preautophagosomal structure membrane. The enzyme catalyses a sterol + UDP-alpha-D-glucose = a sterol 3-beta-D-glucoside + UDP + H(+). It catalyses the reaction ergosterol + UDP-alpha-D-glucose = ergosteryl 3-beta-D-glucoside + UDP + H(+). Functionally, sterol glycosyltransferase responsible for the glycosylation of ergosterol to form ergosterol-glucoside. Mediates autophagic degradation of peroxisomes (pexophagy). This is Sterol 3-beta-glucosyltransferase from Pichia angusta (Yeast).